Consider the following 146-residue polypeptide: Snaclec coagulation factor IX/factor X-binding protein subunit B (146 aa).

The N-terminal stretch at 1-23 is a signal peptide; that stretch reads MGRFIFLSFGLLVVFLSLSGTGA. Disulfide bonds link C25/C36, C53/C142, and C119/C134. One can recognise a C-type lectin domain in the interval 32-143; sequence YEGHCYKPFN…CRMEAYFVCE (112 aa). Ca(2+) contacts are provided by S64 and E70. E143 contributes to the Ca(2+) binding site.

It belongs to the snaclec family. As to quaternary structure, heterodimer with subunit A of IX/X-bp or IX-bp; disulfide-linked. In terms of tissue distribution, expressed by the venom gland.

The protein resides in the secreted. Its function is as follows. When linked to subunit A of IX/X-bp, anticoagulant protein which binds to the gamma-carboxyglutamic acid-domain regions of factors IX (F9) and factor X (F10) in the presence of calcium with a 1 to 1 stoichiometry. When linked to subunit A of IX-bp, anticoagulant protein which binds to the gamma-carboxyglutamic acid-domain regions of factor IX (but not to factor X) in the presence of calcium with a 1 to 1 stoichiometry. The polypeptide is Snaclec coagulation factor IX/factor X-binding protein subunit B (Gloydius halys (Chinese water mocassin)).